Consider the following 95-residue polypeptide: Toxin HigB-1 (95 aa).

Functionally, toxic component of a type II toxin-antitoxin (TA) system. Inhibits translation by cleavage of mRNA. The protein is Toxin HigB-1 (higB-1) of Vibrio cholerae serotype O1 (strain ATCC 39315 / El Tor Inaba N16961).